The primary structure comprises 1902 residues: Putative surface cell antigen sca1 (1902 aa).

The N-terminal stretch at 1–28 (MNKLTEQHLLKKSRFLKYSLLASISVGA) is a signal peptide. 5 disordered regions span residues 140-273 (GIEK…TFVP), 420-485 (QGVF…SRTA), 707-729 (TTTT…YSSS), 858-885 (NRRR…AWGN), and 1470-1548 (KSES…SDGD). 2 stretches are compositionally biased toward polar residues: residues 146-159 (QSQN…TEQM) and 168-197 (TASS…SPEH). Residues 199-212 (TTAPGTPSSTPATP) show a composition bias toward low complexity. Over residues 225–238 (LGANTPPNINTNSK) the composition is skewed to polar residues. Over residues 246–264 (SSSGPQQQAVQSSSQVKSE) the composition is skewed to low complexity. A compositionally biased stretch (polar residues) spans 423–439 (FNKNKSSGGNARKSSAG). The span at 445 to 482 (KKQEAQKQLSEIKKQEKAIKTASDKAKEVAASAKKETS) shows a compositional bias: basic and acidic residues. Positions 863–874 (RDGETSKQRTVD) are enriched in basic and acidic residues. Positions 1491 to 1507 (LSSLPALASSNESALAL) are enriched in low complexity. The span at 1521-1538 (SSEDEESYDSGFEEEEET) shows a compositional bias: acidic residues. One can recognise an Autotransporter domain in the interval 1618 to 1902 (ESHIKRGLWM…QGSVKLKVNL (285 aa)).

It is found in the cell outer membrane. This chain is Putative surface cell antigen sca1 (sca1), found in Rickettsia conorii (strain ATCC VR-613 / Malish 7).